Consider the following 216-residue polypeptide: Pyridoxine/pyridoxamine 5'-phosphate oxidase (216 aa).

Substrate-binding positions include 12-15 and Lys-70; that span reads RREY. Residues 65–70, 80–81, Arg-86, Lys-87, and Gln-109 contribute to the FMN site; these read RLVLLK and YT. Positions 127, 131, and 135 each coordinate substrate. FMN-binding positions include 144–145 and Trp-189; that span reads QS. 195-197 contributes to the substrate binding site; the sequence is RLH. Arg-199 contacts FMN.

The protein belongs to the pyridoxamine 5'-phosphate oxidase family. As to quaternary structure, homodimer. The cofactor is FMN.

It carries out the reaction pyridoxamine 5'-phosphate + O2 + H2O = pyridoxal 5'-phosphate + H2O2 + NH4(+). The catalysed reaction is pyridoxine 5'-phosphate + O2 = pyridoxal 5'-phosphate + H2O2. Its pathway is cofactor metabolism; pyridoxal 5'-phosphate salvage; pyridoxal 5'-phosphate from pyridoxamine 5'-phosphate: step 1/1. It functions in the pathway cofactor metabolism; pyridoxal 5'-phosphate salvage; pyridoxal 5'-phosphate from pyridoxine 5'-phosphate: step 1/1. Its function is as follows. Catalyzes the oxidation of either pyridoxine 5'-phosphate (PNP) or pyridoxamine 5'-phosphate (PMP) into pyridoxal 5'-phosphate (PLP). The polypeptide is Pyridoxine/pyridoxamine 5'-phosphate oxidase (Baumannia cicadellinicola subsp. Homalodisca coagulata).